The primary structure comprises 220 residues: PKHD-type hydroxylase sync_1544 (220 aa).

The 95-residue stretch at Lys-79–Ser-173 folds into the Fe2OG dioxygenase domain. His-97, Asp-99, and His-154 together coordinate Fe cation. Residue Arg-164 participates in 2-oxoglutarate binding.

It depends on Fe(2+) as a cofactor. L-ascorbate serves as cofactor.

The protein is PKHD-type hydroxylase sync_1544 of Synechococcus sp. (strain CC9311).